The chain runs to 124 residues: Small ribosomal subunit protein uS12 (124 aa).

Residue Asp89 is modified to 3-methylthioaspartic acid.

The protein belongs to the universal ribosomal protein uS12 family. As to quaternary structure, part of the 30S ribosomal subunit. Contacts proteins S8 and S17. May interact with IF1 in the 30S initiation complex.

Its function is as follows. With S4 and S5 plays an important role in translational accuracy. In terms of biological role, interacts with and stabilizes bases of the 16S rRNA that are involved in tRNA selection in the A site and with the mRNA backbone. Located at the interface of the 30S and 50S subunits, it traverses the body of the 30S subunit contacting proteins on the other side and probably holding the rRNA structure together. The combined cluster of proteins S8, S12 and S17 appears to hold together the shoulder and platform of the 30S subunit. In Mannheimia succiniciproducens (strain KCTC 0769BP / MBEL55E), this protein is Small ribosomal subunit protein uS12.